The sequence spans 419 residues: Histidine--tRNA ligase (419 aa).

This sequence belongs to the class-II aminoacyl-tRNA synthetase family. In terms of assembly, homodimer.

The protein localises to the cytoplasm. The enzyme catalyses tRNA(His) + L-histidine + ATP = L-histidyl-tRNA(His) + AMP + diphosphate + H(+). This Methylobacillus flagellatus (strain ATCC 51484 / DSM 6875 / VKM B-1610 / KT) protein is Histidine--tRNA ligase.